Reading from the N-terminus, the 160-residue chain is Transcription elongation factor GreA (160 aa).

Residues 49 to 75 (SEYDEAKNDQAFTEGRIIQLENMLKNA) are a coiled coil.

It belongs to the GreA/GreB family.

Its function is as follows. Necessary for efficient RNA polymerase transcription elongation past template-encoded arresting sites. The arresting sites in DNA have the property of trapping a certain fraction of elongating RNA polymerases that pass through, resulting in locked ternary complexes. Cleavage of the nascent transcript by cleavage factors such as GreA or GreB allows the resumption of elongation from the new 3'terminus. GreA releases sequences of 2 to 3 nucleotides. The protein is Transcription elongation factor GreA of Clostridium beijerinckii (strain ATCC 51743 / NCIMB 8052) (Clostridium acetobutylicum).